The following is a 236-amino-acid chain: Small ribosomal subunit protein uS2c (236 aa).

It belongs to the universal ribosomal protein uS2 family.

The protein resides in the plastid. It is found in the chloroplast. This chain is Small ribosomal subunit protein uS2c (rps2), found in Acorus calamus var. americanus (American sweet flag).